Here is a 221-residue protein sequence, read N- to C-terminus: MGYYDDDGNYHSFRRGVERAVDRITHPFHHHHHDHHDHHREEVIVTDERGPVRYRDGVKENVRIVEPRGAAATTSETVPIPTHFIRVGDILVLQGRPCQVIRISSSPMTDQRRYTGVDLFTRELHEESSFVSNPKPSVVVQTMLGPVYKTYRILDIQEGTIVALTESGDVKSGIPVIPQGNLYQRIKDAFLEGRGSVRALVINDGGRELVVDYKIIHSSRL.

A Microbody targeting signal motif is present at residues 219–221 (SRL).

The protein belongs to the eIF-5A family. Hex1 subfamily. As to quaternary structure, forms oligomers. Self-assembles into hexagonal rods.

It is found in the cell septum. Its function is as follows. Major component of Woronin bodies, fungal-specific organelles that occlude septal pores in order to separate intact from damaged compartments. Hex1 binds directly or indirectly to the Woronin body tether that in turn is anchored at the rim of the septal pore. The protein is Woronin body major protein of Emericella nidulans (strain FGSC A4 / ATCC 38163 / CBS 112.46 / NRRL 194 / M139) (Aspergillus nidulans).